The primary structure comprises 448 residues: U1 small nuclear ribonucleoprotein 70 kDa (448 aa).

Residues 91-201 (TEIKNATEDP…GGGLGGTRRG (111 aa)) are required for interaction with U1 RNA. In terms of domain architecture, RRM spans 102-180 (RTLFIARINY…KRVLVDVERA (79 aa)). Residues 188 to 448 (PRRLGGGLGG…SSGDPSWWRQ (261 aa)) are disordered. The segment covering 191–200 (LGGGLGGTRR) has biased composition (gly residues). Composition is skewed to basic and acidic residues over residues 206–234 (NIKH…REGP) and 262–272 (ERRDRERDRGR). Basic residues predominate over residues 281-293 (SRSRSRERRKRRA). 2 stretches are compositionally biased toward basic and acidic residues: residues 294–320 (GSRE…DRER) and 346–376 (RDRE…IKEE). Residues 405-425 (RPPPAHHNMFSVPPPPILGRG) are mediates binding to Psi. The segment covering 426–448 (NASTNPNPDNGQQSSGDPSWWRQ) has biased composition (polar residues).

Component of the U1 snRNP. Interacts with Psi; essential for alternative splicing of P-element transposase. Interacts with the SMN complex.

The protein resides in the nucleus speckle. It is found in the nucleus. It localises to the nucleoplasm. Its function is as follows. Mediates the splicing of pre-mRNA by binding to the stem loop I region of U1-snRNA. Required during oogenesis for nurse cell chromatin dispersal. This Drosophila melanogaster (Fruit fly) protein is U1 small nuclear ribonucleoprotein 70 kDa (snRNP-U1-70K).